Reading from the N-terminus, the 178-residue chain is Large ribosomal subunit protein uL5 (178 aa).

It belongs to the universal ribosomal protein uL5 family. Part of the 50S ribosomal subunit; part of the 5S rRNA/L5/L18/L25 subcomplex. Contacts the 5S rRNA and the P site tRNA. Forms a bridge to the 30S subunit in the 70S ribosome.

Its function is as follows. This is one of the proteins that bind and probably mediate the attachment of the 5S RNA into the large ribosomal subunit, where it forms part of the central protuberance. In the 70S ribosome it contacts protein S13 of the 30S subunit (bridge B1b), connecting the 2 subunits; this bridge is implicated in subunit movement. Contacts the P site tRNA; the 5S rRNA and some of its associated proteins might help stabilize positioning of ribosome-bound tRNAs. The chain is Large ribosomal subunit protein uL5 from Acinetobacter baylyi (strain ATCC 33305 / BD413 / ADP1).